The chain runs to 374 residues: UPF0754 membrane protein NWMN_1738 (374 aa).

Helical transmembrane passes span 4-24 and 354-374; these read LFII…TNVI and SLGF…AIFV.

It belongs to the UPF0754 family.

Its subcellular location is the cell membrane. This is UPF0754 membrane protein NWMN_1738 from Staphylococcus aureus (strain Newman).